The chain runs to 249 residues: 3-deoxy-D-manno-octulosonic acid kinase (249 aa).

The active site involves Asp-175.

It belongs to the protein kinase superfamily. KdkA/RfaP family.

It is found in the cell inner membrane. It carries out the reaction an alpha-Kdo-(2-&gt;6)-lipid IVA + ATP = a 4-O-phospho-alpha-Kdo-(2-&gt;6)-lipid IVA + ADP + H(+). It participates in bacterial outer membrane biogenesis; LPS core biosynthesis. In terms of biological role, catalyzes the ATP-dependent phosphorylation of the 3-deoxy-D-manno-octulosonic acid (Kdo) residue in Kdo-lipid IV(A) at the 4-OH position. The chain is 3-deoxy-D-manno-octulosonic acid kinase from Xanthomonas euvesicatoria pv. vesicatoria (strain 85-10) (Xanthomonas campestris pv. vesicatoria).